The sequence spans 134 residues: Cytochrome b (134 aa).

3 helical membrane-spanning segments follow: residues 33 to 53 (FGSL…FLAM), 77 to 98 (WLIR…FLHV), and 113 to 133 (WNMG…GYVL). 2 residues coordinate heme b: H83 and H97.

Belongs to the cytochrome b family. The cytochrome bc1 complex contains 11 subunits: 3 respiratory subunits (MT-CYB, CYC1 and UQCRFS1), 2 core proteins (UQCRC1 and UQCRC2) and 6 low-molecular weight proteins (UQCRH/QCR6, UQCRB/QCR7, UQCRQ/QCR8, UQCR10/QCR9, UQCR11/QCR10 and a cleavage product of UQCRFS1). This cytochrome bc1 complex then forms a dimer. Heme b is required as a cofactor.

It localises to the mitochondrion inner membrane. In terms of biological role, component of the ubiquinol-cytochrome c reductase complex (complex III or cytochrome b-c1 complex) that is part of the mitochondrial respiratory chain. The b-c1 complex mediates electron transfer from ubiquinol to cytochrome c. Contributes to the generation of a proton gradient across the mitochondrial membrane that is then used for ATP synthesis. This is Cytochrome b (MT-CYB) from Microtus subterraneus (European pine vole).